A 30-amino-acid chain; its full sequence is Basic phospholipase A2 CM-I (30 aa).

It belongs to the phospholipase A2 family. Group I subfamily. It depends on Ca(2+) as a cofactor. In terms of tissue distribution, expressed by the venom gland.

It localises to the secreted. It carries out the reaction a 1,2-diacyl-sn-glycero-3-phosphocholine + H2O = a 1-acyl-sn-glycero-3-phosphocholine + a fatty acid + H(+). Its function is as follows. Snake venom phospholipase A2 (PLA2) that shows weak anticoagulant activity. Is more catalytically active than the strong anticoagulant protein CM-IV found in this venom. Acts by inhibiting the complex composed of tissue factor (F3) and coagulation factor VIIa (F7) (TF-VIIa complex) by only enzymatic mechanism. PLA2 catalyzes the calcium-dependent hydrolysis of the 2-acyl groups in 3-sn-phosphoglycerides. The polypeptide is Basic phospholipase A2 CM-I (Naja nigricollis (Black-necked spitting cobra)).